A 101-amino-acid polypeptide reads, in one-letter code: Small ribosomal subunit protein uS14 (101 aa).

The protein belongs to the universal ribosomal protein uS14 family. Part of the 30S ribosomal subunit. Contacts proteins S3 and S10.

Its function is as follows. Binds 16S rRNA, required for the assembly of 30S particles and may also be responsible for determining the conformation of the 16S rRNA at the A site. This Rhizobium johnstonii (strain DSM 114642 / LMG 32736 / 3841) (Rhizobium leguminosarum bv. viciae) protein is Small ribosomal subunit protein uS14.